The sequence spans 208 residues: FMN-dependent NADH:quinone oxidoreductase (208 aa).

Residues 17-19, 99-102, and 143-146 each bind FMN; these read SNS, MWNL, and SRGG.

This sequence belongs to the azoreductase type 1 family. As to quaternary structure, homodimer. It depends on FMN as a cofactor.

The enzyme catalyses 2 a quinone + NADH + H(+) = 2 a 1,4-benzosemiquinone + NAD(+). It catalyses the reaction N,N-dimethyl-1,4-phenylenediamine + anthranilate + 2 NAD(+) = 2-(4-dimethylaminophenyl)diazenylbenzoate + 2 NADH + 2 H(+). Quinone reductase that provides resistance to thiol-specific stress caused by electrophilic quinones. In terms of biological role, also exhibits azoreductase activity. Catalyzes the reductive cleavage of the azo bond in aromatic azo compounds to the corresponding amines. The sequence is that of FMN-dependent NADH:quinone oxidoreductase from Staphylococcus aureus (strain MRSA252).